An 89-amino-acid chain; its full sequence is Envelope protein US9 (89 aa).

The segment covering 1–10 has biased composition (basic and acidic residues); the sequence is MTSRPADQDS. Residues 1-21 form a disordered region; it reads MTSRPADQDSVRSSASVPLYP. The Intravirion segment spans residues 1–66; the sequence is MTSRPADQDS…RRRRTRCVGL (66 aa). Positions 20–23 match the Internalization motif motif; it reads YPAA. The acidic stretch occupies residues 29–38; it reads EAYYSESEDE. Phosphoserine; by host CK2 is present on residues serine 33 and serine 35. A helical; Signal-anchor for type II membrane protein transmembrane segment spans residues 67–87; that stretch reads VIACLVVALLSGGFGALLVWL. Over 88–89 the chain is Virion surface; it reads LR.

It belongs to the alphaherpesvirinae envelope protein US9 family. In terms of processing, phosphorylated on serines within the acidic cluster, possibly by host CK2. Phosphorylation determines whether endocytosed viral US9 traffics to the trans-Golgi network or recycles to the cell membrane.

The protein localises to the virion membrane. It localises to the host Golgi apparatus membrane. Its subcellular location is the host smooth endoplasmic reticulum membrane. It is found in the host cell membrane. Functionally, essential for the anterograde spread of the infection throughout the host nervous system. Together with the gE/gI heterodimer, US9 is involved in the sorting and transport of viral structural components toward axon tips. The polypeptide is Envelope protein US9 (Homo sapiens (Human)).